Reading from the N-terminus, the 212-residue chain is Pyridoxine/pyridoxamine 5'-phosphate oxidase (212 aa).

Residues 57 to 62 (RMVLLK), 72 to 73 (YT), arginine 78, lysine 79, and glutamine 101 contribute to the FMN site. Residue lysine 62 coordinates substrate. 3 residues coordinate substrate: tyrosine 119, arginine 123, and serine 127. FMN contacts are provided by residues 136 to 137 (QS) and tryptophan 181. 187 to 189 (RLH) is a binding site for substrate. FMN is bound at residue arginine 191.

The protein belongs to the pyridoxamine 5'-phosphate oxidase family. As to quaternary structure, homodimer. FMN is required as a cofactor.

It carries out the reaction pyridoxamine 5'-phosphate + O2 + H2O = pyridoxal 5'-phosphate + H2O2 + NH4(+). The enzyme catalyses pyridoxine 5'-phosphate + O2 = pyridoxal 5'-phosphate + H2O2. It participates in cofactor metabolism; pyridoxal 5'-phosphate salvage; pyridoxal 5'-phosphate from pyridoxamine 5'-phosphate: step 1/1. Its pathway is cofactor metabolism; pyridoxal 5'-phosphate salvage; pyridoxal 5'-phosphate from pyridoxine 5'-phosphate: step 1/1. In terms of biological role, catalyzes the oxidation of either pyridoxine 5'-phosphate (PNP) or pyridoxamine 5'-phosphate (PMP) into pyridoxal 5'-phosphate (PLP). This Erythrobacter litoralis (strain HTCC2594) protein is Pyridoxine/pyridoxamine 5'-phosphate oxidase.